Consider the following 500-residue polypeptide: tRNA (guanine(37)-N(1))-methyltransferase (500 aa).

S-adenosyl-L-methionine-binding positions include H215, 253–254 (DL), 281–282 (DA), and N312. Residues 463–500 (QIVAKKTPKPAPRPLPAKNKTTPDTNKMETDLTKLEMK) are disordered. A compositionally biased stretch (basic and acidic residues) spans 488–500 (NKMETDLTKLEMK).

This sequence belongs to the class I-like SAM-binding methyltransferase superfamily. TRM5/TYW2 family. As to quaternary structure, monomer.

It localises to the mitochondrion matrix. Its subcellular location is the nucleus. The protein resides in the cytoplasm. It catalyses the reaction guanosine(37) in tRNA + S-adenosyl-L-methionine = N(1)-methylguanosine(37) in tRNA + S-adenosyl-L-homocysteine + H(+). Functionally, specifically methylates the N1 position of guanosine-37 in various cytoplasmic and mitochondrial tRNAs. Methylation is not dependent on the nature of the nucleoside 5' of the target nucleoside. This is the first step in the biosynthesis of wybutosine (yW), a modified base adjacent to the anticodon of tRNAs and required for accurate decoding. The protein is tRNA (guanine(37)-N(1))-methyltransferase of Anopheles darlingi (Mosquito).